The chain runs to 429 residues: Tol-Pal system protein TolB (429 aa).

The signal sequence occupies residues 1–22 (MTRRLFILITIMLCLIPALLHS). Disordered regions lie at residues 362 to 383 (PDGT…RWSP) and 407 to 429 (GSGQ…SPRW). Positions 363 to 374 (DGTNDTRLTSEG) are enriched in polar residues.

It belongs to the TolB family. In terms of assembly, the Tol-Pal system is composed of five core proteins: the inner membrane proteins TolA, TolQ and TolR, the periplasmic protein TolB and the outer membrane protein Pal. They form a network linking the inner and outer membranes and the peptidoglycan layer.

Its subcellular location is the periplasm. Functionally, part of the Tol-Pal system, which plays a role in outer membrane invagination during cell division and is important for maintaining outer membrane integrity. In Geobacter metallireducens (strain ATCC 53774 / DSM 7210 / GS-15), this protein is Tol-Pal system protein TolB.